The chain runs to 496 residues: Probable cytosol aminopeptidase (496 aa).

The Mn(2+) site is built by Lys257 and Asp262. The active site involves Lys269. Residues Asp281, Asp341, and Glu343 each contribute to the Mn(2+) site. Arg345 is a catalytic residue.

The protein belongs to the peptidase M17 family. Mn(2+) is required as a cofactor.

The protein localises to the cytoplasm. It catalyses the reaction Release of an N-terminal amino acid, Xaa-|-Yaa-, in which Xaa is preferably Leu, but may be other amino acids including Pro although not Arg or Lys, and Yaa may be Pro. Amino acid amides and methyl esters are also readily hydrolyzed, but rates on arylamides are exceedingly low.. The enzyme catalyses Release of an N-terminal amino acid, preferentially leucine, but not glutamic or aspartic acids.. Functionally, presumably involved in the processing and regular turnover of intracellular proteins. Catalyzes the removal of unsubstituted N-terminal amino acids from various peptides. This is Probable cytosol aminopeptidase from Synechococcus sp. (strain CC9311).